Consider the following 151-residue polypeptide: UPF0208 membrane protein YPTB2595 (151 aa).

2 consecutive transmembrane segments (helical) span residues Phe46–Gly66 and Leu69–Trp89.

Belongs to the UPF0208 family.

Its subcellular location is the cell inner membrane. In Yersinia pseudotuberculosis serotype I (strain IP32953), this protein is UPF0208 membrane protein YPTB2595.